Consider the following 168-residue polypeptide: Ribosome maturation factor RimP (168 aa).

The protein belongs to the RimP family.

It localises to the cytoplasm. Required for maturation of 30S ribosomal subunits. This Syntrophobacter fumaroxidans (strain DSM 10017 / MPOB) protein is Ribosome maturation factor RimP.